We begin with the raw amino-acid sequence, 1677 residues long: Pentafunctional AROM polypeptide (1677 aa).

The segment at 1 to 394 (MAVADDTKAD…YEQKASIVED (394 aa)) is 3-dehydroquinate synthase. Residues 50-52 (DDN), 89-92 (ETSK), 120-122 (GGV), and aspartate 125 each bind NAD(+). Arginine 136 is a binding site for 7-phospho-2-dehydro-3-deoxy-D-arabino-heptonate. 145–146 (TT) contributes to the NAD(+) binding site. 7-phospho-2-dehydro-3-deoxy-D-arabino-heptonate-binding residues include aspartate 152 and lysine 158. Lysine 167 serves as a coordination point for NAD(+). Asparagine 168 provides a ligand contact to 7-phospho-2-dehydro-3-deoxy-D-arabino-heptonate. NAD(+)-binding positions include 185–188 (YLET) and asparagine 196. Glutamate 200 provides a ligand contact to Zn(2+). 7-phospho-2-dehydro-3-deoxy-D-arabino-heptonate contacts are provided by residues 200-203 (EVVK) and lysine 260. Catalysis depends on glutamate 270, which acts as the Proton acceptor; for 3-dehydroquinate synthase activity. 7-phospho-2-dehydro-3-deoxy-D-arabino-heptonate contacts are provided by residues 274-278 (RNLVN) and histidine 281. Histidine 281 lines the Zn(2+) pocket. The active-site Proton acceptor; for 3-dehydroquinate synthase activity is histidine 285. The 7-phospho-2-dehydro-3-deoxy-D-arabino-heptonate site is built by histidine 297 and lysine 366. Position 297 (histidine 297) interacts with Zn(2+). Positions 407–858 (VVPSIPTGNV…WDDLENKIGI (452 aa)) are EPSP synthase. Cysteine 840 acts as the For EPSP synthase activity in catalysis. Residues 885–1113 (NSSILLIGMR…GQQRRTYFLC (229 aa)) are shikimate kinase. 892–899 (GMRGTGKT) contributes to the ATP binding site. The segment at 1114-1341 (LTYPDVRHAF…AAPGQLSFKQ (228 aa)) is 3-dehydroquinase. Histidine 1243 acts as the Proton acceptor; for 3-dehydroquinate dehydratase activity in catalysis. Lysine 1271 (schiff-base intermediate with substrate; for 3-dehydroquinate dehydratase activity) is an active-site residue. The shikimate dehydrogenase stretch occupies residues 1354–1677 (SKHFHLFGTP…TRVWEKYGEV (324 aa)).

It in the N-terminal section; belongs to the sugar phosphate cyclases superfamily. Dehydroquinate synthase family. In the 2nd section; belongs to the EPSP synthase family. The protein in the 3rd section; belongs to the shikimate kinase family. This sequence in the 4th section; belongs to the type-I 3-dehydroquinase family. It in the C-terminal section; belongs to the shikimate dehydrogenase family. Homodimer. It depends on Zn(2+) as a cofactor.

The protein localises to the cytoplasm. It carries out the reaction 7-phospho-2-dehydro-3-deoxy-D-arabino-heptonate = 3-dehydroquinate + phosphate. The enzyme catalyses 3-dehydroquinate = 3-dehydroshikimate + H2O. The catalysed reaction is shikimate + NADP(+) = 3-dehydroshikimate + NADPH + H(+). It catalyses the reaction shikimate + ATP = 3-phosphoshikimate + ADP + H(+). It carries out the reaction 3-phosphoshikimate + phosphoenolpyruvate = 5-O-(1-carboxyvinyl)-3-phosphoshikimate + phosphate. Its pathway is metabolic intermediate biosynthesis; chorismate biosynthesis; chorismate from D-erythrose 4-phosphate and phosphoenolpyruvate: step 2/7. The protein operates within metabolic intermediate biosynthesis; chorismate biosynthesis; chorismate from D-erythrose 4-phosphate and phosphoenolpyruvate: step 3/7. It participates in metabolic intermediate biosynthesis; chorismate biosynthesis; chorismate from D-erythrose 4-phosphate and phosphoenolpyruvate: step 4/7. It functions in the pathway metabolic intermediate biosynthesis; chorismate biosynthesis; chorismate from D-erythrose 4-phosphate and phosphoenolpyruvate: step 5/7. Its pathway is metabolic intermediate biosynthesis; chorismate biosynthesis; chorismate from D-erythrose 4-phosphate and phosphoenolpyruvate: step 6/7. Functionally, the AROM polypeptide catalyzes 5 consecutive enzymatic reactions in prechorismate polyaromatic amino acid biosynthesis. This Coprinopsis cinerea (strain Okayama-7 / 130 / ATCC MYA-4618 / FGSC 9003) (Inky cap fungus) protein is Pentafunctional AROM polypeptide.